A 620-amino-acid chain; its full sequence is Chaperone protein HtpG (620 aa).

An a; substrate-binding region spans residues 1–334 (MTTTDTAPQT…SEDLPLNLSR (334 aa)). The interval 335 to 548 (EMLQNNPQLV…GQGPDRALER (214 aa)) is b. Positions 549 to 620 (MLAQQNRGGA…RINRLVLRAL (72 aa)) are c.

It belongs to the heat shock protein 90 family. Homodimer.

The protein localises to the cytoplasm. Molecular chaperone. Has ATPase activity. The chain is Chaperone protein HtpG from Rhodopseudomonas palustris (strain BisA53).